The following is a 501-amino-acid chain: ADP,ATP carrier protein 3 (501 aa).

12 helical membrane-spanning segments follow: residues 23-43, 59-79, 90-110, 146-166, 183-203, 227-247, 293-313, 326-346, 361-381, 383-403, 446-466, and 470-490; these read LKLFIPMALMMLCILFNFGAL, IISFLKLWLVLPSCVIFTILY, YIFYSIVGTFLLFFLLFAYII, YALMYIFSELWSAVVINLMFW, PVLGMVGNIGLIIAGSVLVFF, IMLQPIISIIVTAGIIAMFLF, IALLIICYGLLINIVEGPWKA, VNFMGMFNIWMGISCVTFMII, LLTPIMLSITGFMFFIFIIFI, EIGTCFGDFNLLYVAIIVGAI, FGKSLGAFIQSLIFIIIPTAT, and IIIYLLVIFIVMMNLWIWNII.

Belongs to the ADP/ATP translocase tlc family.

Its subcellular location is the cell membrane. Functionally, provides the rickettsial cell with host ATP in exchange for rickettsial ADP. This is an obligate exchange system. This energy acquiring activity is an important component of rickettsial parasitism. The polypeptide is ADP,ATP carrier protein 3 (tlcC) (Rickettsia prowazekii (strain Madrid E)).